Here is a 69-residue protein sequence, read N- to C-terminus: Large ribosomal subunit protein uL29 (69 aa).

The protein belongs to the universal ribosomal protein uL29 family.

This is Large ribosomal subunit protein uL29 from Methylobacillus flagellatus (strain ATCC 51484 / DSM 6875 / VKM B-1610 / KT).